The sequence spans 307 residues: MEIQFLGTGAGQPSKSRNTQAIALKMLDERNEIWLFDCGEASQHQILNTAIKPRKITKIFITHLHGDHIFGLPGFLSSRSFQSSDEQTDLDLYGPVGIKEFVLTGLRISGSRLGYRINFHEIDSAGKIFEDDSFEVYTDLLDHTIFCLGYRVVEKNRVGELDANALKEAGLPFGPLFGKIKKGEVVAYDGKTFDPKDYIGADKVGKIVTILGDTRKTKTAVRLAWQADLLVHEATYEASESKMARAHGHSTTKQAADVAKEAGVNRLLLTHISARYVGPLVGQLVREAQAVHANTFVSKDLYEEKIG.

The Zn(2+) site is built by His-63, His-65, Asp-67, His-68, His-143, Asp-213, and His-271. Catalysis depends on Asp-67, which acts as the Proton acceptor.

It belongs to the RNase Z family. In terms of assembly, homodimer. Requires Zn(2+) as cofactor.

It carries out the reaction Endonucleolytic cleavage of RNA, removing extra 3' nucleotides from tRNA precursor, generating 3' termini of tRNAs. A 3'-hydroxy group is left at the tRNA terminus and a 5'-phosphoryl group is left at the trailer molecule.. Zinc phosphodiesterase, which displays some tRNA 3'-processing endonuclease activity. Probably involved in tRNA maturation, by removing a 3'-trailer from precursor tRNA. The chain is Ribonuclease Z from Lactococcus lactis subsp. cremoris (strain SK11).